The sequence spans 64 residues: Large ribosomal subunit protein bL33 (64 aa).

The protein belongs to the bacterial ribosomal protein bL33 family.

This chain is Large ribosomal subunit protein bL33, found in Thermosynechococcus vestitus (strain NIES-2133 / IAM M-273 / BP-1).